Consider the following 437-residue polypeptide: Ribosomal protein uS12 methylthiotransferase RimO (437 aa).

An MTTase N-terminal domain is found at Lys3 to Pro118. [4Fe-4S] cluster-binding residues include Cys12, Cys48, Cys81, Cys157, Cys161, and Cys164. The 228-residue stretch at Asn143 to Glu370 folds into the Radical SAM core domain. The TRAM domain occupies Glu373 to Val437.

It belongs to the methylthiotransferase family. RimO subfamily. It depends on [4Fe-4S] cluster as a cofactor.

It localises to the cytoplasm. The catalysed reaction is L-aspartate(89)-[ribosomal protein uS12]-hydrogen + (sulfur carrier)-SH + AH2 + 2 S-adenosyl-L-methionine = 3-methylsulfanyl-L-aspartate(89)-[ribosomal protein uS12]-hydrogen + (sulfur carrier)-H + 5'-deoxyadenosine + L-methionine + A + S-adenosyl-L-homocysteine + 2 H(+). Its function is as follows. Catalyzes the methylthiolation of an aspartic acid residue of ribosomal protein uS12. This chain is Ribosomal protein uS12 methylthiotransferase RimO, found in Leptospira interrogans serogroup Icterohaemorrhagiae serovar Lai (strain 56601).